Reading from the N-terminus, the 266-residue chain is ATP synthase subunit a (266 aa).

6 helical membrane-spanning segments follow: residues Lys-38–Ala-58, Leu-99–Ile-119, His-126–Val-146, Gly-162–Val-182, Leu-191–Tyr-211, and Ser-224–Leu-244.

Belongs to the ATPase A chain family. In terms of assembly, F-type ATPases have 2 components, CF(1) - the catalytic core - and CF(0) - the membrane proton channel. CF(1) has five subunits: alpha(3), beta(3), gamma(1), delta(1), epsilon(1). CF(0) has three main subunits: a(1), b(2) and c(9-12). The alpha and beta chains form an alternating ring which encloses part of the gamma chain. CF(1) is attached to CF(0) by a central stalk formed by the gamma and epsilon chains, while a peripheral stalk is formed by the delta and b chains.

It localises to the cell membrane. Key component of the proton channel; it plays a direct role in the translocation of protons across the membrane. The polypeptide is ATP synthase subunit a (Arthrobacter sp. (strain FB24)).